The following is a 259-amino-acid chain: Protein unc-50 homolog A (259 aa).

Topologically, residues 1-82 are cytoplasmic; that stretch reads MLPTTSVSPR…TKDQWARDDP (82 aa). A helical transmembrane segment spans residues 83 to 103; that stretch reads AFLVLLSIWLCVSTVGFGFVL. Over 104–112 the chain is Lumenal; that stretch reads DMSFFETFK. The helical transmembrane segment at 113–133 threads the bilayer; that stretch reads LLLWVVFIDCVGVGLLIATLM. Residues 134–158 are Cytoplasmic-facing; sequence WFVSNKYMVKRQGKDYDVEWGYTFD. The chain crosses the membrane as a helical span at residues 159-179; the sequence is VHLNAFYPLLVILHFIQLFFI. Residues 180-181 lie on the Lumenal side of the membrane; it reads NH. The chain crosses the membrane as a helical span at residues 182-202; that stretch reads VILSGWFIGYFVGNTIWLIAI. Over 203-222 the chain is Cytoplasmic; sequence GYYIYITFLGYSALPFLKNT. A helical membrane pass occupies residues 223–243; it reads VILLYPFAALALLYVLSLALG. Over 244-259 the chain is Lumenal; that stretch reads WNFTEKLCLFYKYRVR.

It belongs to the unc-50 family.

The protein resides in the nucleus inner membrane. It localises to the golgi apparatus membrane. Functionally, involved in the cell surface expression of neuronal nicotinic receptors. Binds RNA. The sequence is that of Protein unc-50 homolog A (unc50-a) from Xenopus laevis (African clawed frog).